A 165-amino-acid polypeptide reads, in one-letter code: Phosphopantetheine adenylyltransferase (165 aa).

Thr-9 contacts substrate. ATP-binding positions include 9 to 10 (TF) and His-17. The substrate site is built by Lys-41, Leu-78, and Arg-92. Residues 93–95 (GLR), Glu-103, and 128–134 (RQAIASK) each bind ATP.

Belongs to the bacterial CoaD family. In terms of assembly, homohexamer. The cofactor is Mg(2+).

Its subcellular location is the cytoplasm. It carries out the reaction (R)-4'-phosphopantetheine + ATP + H(+) = 3'-dephospho-CoA + diphosphate. It functions in the pathway cofactor biosynthesis; coenzyme A biosynthesis; CoA from (R)-pantothenate: step 4/5. Its function is as follows. Reversibly transfers an adenylyl group from ATP to 4'-phosphopantetheine, yielding dephospho-CoA (dPCoA) and pyrophosphate. The sequence is that of Phosphopantetheine adenylyltransferase from Ruegeria pomeroyi (strain ATCC 700808 / DSM 15171 / DSS-3) (Silicibacter pomeroyi).